Reading from the N-terminus, the 388-residue chain is Ras-related protein Rab-26 (388 aa).

The segment at 1-115 is disordered; the sequence is MASTAVGLGG…HHHSQLSLTG (115 aa). Gly residues predominate over residues 7 to 21; that stretch reads GLGGGEGDPGAGGPP. The segment covering 47–56 has biased composition (basic and acidic residues); sequence RIEELRRRPF. Positions 67–86 are enriched in low complexity; it reads PASVSASITTTTTQQQQQHH. Residues 87–109 show a composition bias toward basic residues; the sequence is NPSHHHQSSHHQPSHHHHHHHHS. A GTP-binding site is contributed by 197 to 204; that stretch reads GDSGVGKT. The short motif at 219–228 is the Effector region element; it reads SFSATVGIAL. Residues 246-250 and 304-307 each bind GTP; these read DTAGQ and NKAD. Cysteine 382 is lipidated: S-palmitoyl cysteine. Cysteine 385 carries the cysteine methyl ester modification. Residue cysteine 385 is the site of S-geranylgeranyl cysteine attachment. The propeptide at 386–388 is removed in mature form; the sequence is RNM.

The protein belongs to the small GTPase superfamily. Rab family.

The protein resides in the cell membrane. Its function is as follows. Participates in exocrine secretion. The protein is Ras-related protein Rab-26 of Drosophila melanogaster (Fruit fly).